The following is a 200-amino-acid chain: Lipopolysaccharide core heptose(II)-phosphate phosphatase (200 aa).

Residues 1-25 form the signal peptide; sequence MLAFCRSSLKSKKYIIILLALAAIA.

Belongs to the phosphoglycerate mutase family. Ais subfamily.

Its subcellular location is the periplasm. It functions in the pathway bacterial outer membrane biogenesis; lipopolysaccharide metabolism. Functionally, catalyzes the dephosphorylation of heptose(II) of the outer membrane lipopolysaccharide core. This is Lipopolysaccharide core heptose(II)-phosphate phosphatase from Escherichia coli (strain ATCC 8739 / DSM 1576 / NBRC 3972 / NCIMB 8545 / WDCM 00012 / Crooks).